A 512-amino-acid chain; its full sequence is Maturase K (512 aa).

It belongs to the intron maturase 2 family. MatK subfamily.

It localises to the plastid. It is found in the chloroplast. Its function is as follows. Usually encoded in the trnK tRNA gene intron. Probably assists in splicing its own and other chloroplast group II introns. The protein is Maturase K of Dalea wrightii (Wright's prairie clover).